The chain runs to 201 residues: Ras-related protein RabA (201 aa).

15-22 is a GTP binding site; sequence GDSGVGKS. The Effector region motif lies at 37-45; the sequence is YISTIGVDF. Residues 63–67 and 121–124 contribute to the GTP site; these read DTAGQ and NKSD. C198 carries the post-translational modification Cysteine methyl ester. C198 is lipidated: S-geranylgeranyl cysteine. Positions 199–201 are cleaved as a propeptide — removed in mature form; it reads IIN.

It belongs to the small GTPase superfamily. Rab family.

The protein localises to the cell membrane. This Dictyostelium discoideum (Social amoeba) protein is Ras-related protein RabA (rabA).